The following is a 432-amino-acid chain: Putative D-alanyl-D-alanine carboxypeptidase (432 aa).

The chain crosses the membrane as a helical; Signal-anchor span at residues 7–25; that stretch reads ATVLLTFSLSAFAVEYPVL.

It belongs to the peptidase S12 family. YfeW subfamily.

The protein localises to the cell inner membrane. It catalyses the reaction Preferential cleavage: (Ac)2-L-Lys-D-Ala-|-D-Ala. Also transpeptidation of peptidyl-alanyl moieties that are N-acyl substituents of D-alanine.. The sequence is that of Putative D-alanyl-D-alanine carboxypeptidase from Salmonella schwarzengrund (strain CVM19633).